Here is a 132-residue protein sequence, read N- to C-terminus: Phosphoribosyl-AMP cyclohydrolase (132 aa).

Asp89 lines the Mg(2+) pocket. Zn(2+) is bound at residue Cys90. Mg(2+) contacts are provided by Asp91 and Asp93. Residues Cys106 and Cys113 each contribute to the Zn(2+) site.

It belongs to the PRA-CH family. As to quaternary structure, homodimer. Requires Mg(2+) as cofactor. Zn(2+) is required as a cofactor.

It localises to the cytoplasm. It catalyses the reaction 1-(5-phospho-beta-D-ribosyl)-5'-AMP + H2O = 1-(5-phospho-beta-D-ribosyl)-5-[(5-phospho-beta-D-ribosylamino)methylideneamino]imidazole-4-carboxamide. It participates in amino-acid biosynthesis; L-histidine biosynthesis; L-histidine from 5-phospho-alpha-D-ribose 1-diphosphate: step 3/9. Catalyzes the hydrolysis of the adenine ring of phosphoribosyl-AMP. The protein is Phosphoribosyl-AMP cyclohydrolase of Renibacterium salmoninarum (strain ATCC 33209 / DSM 20767 / JCM 11484 / NBRC 15589 / NCIMB 2235).